The primary structure comprises 205 residues: Coenzyme Q-binding protein COQ10, mitochondrial (205 aa).

Belongs to the COQ10 family. In terms of assembly, interacts with coenzyme Q.

The protein localises to the mitochondrion inner membrane. In terms of biological role, required for the function of coenzyme Q in the respiratory chain. May serve as a chaperone or may be involved in the transport of Q6 from its site of synthesis to the catalytic sites of the respiratory complexes. The chain is Coenzyme Q-binding protein COQ10, mitochondrial (coq10-1) from Dictyostelium discoideum (Social amoeba).